We begin with the raw amino-acid sequence, 58 residues long: Large ribosomal subunit protein bL32 (58 aa).

Positions M1–N19 are enriched in basic residues. The disordered stretch occupies residues M1–D58. Residues W20 to L32 are compositionally biased toward low complexity.

Belongs to the bacterial ribosomal protein bL32 family.

This chain is Large ribosomal subunit protein bL32, found in Trichodesmium erythraeum (strain IMS101).